The following is a 92-amino-acid chain: UPF0237 protein MA_3235 (92 aa).

In terms of domain architecture, ACT spans 7–81 (IITVIGSDRV…KSLGVEVKVQ (75 aa)).

The protein belongs to the UPF0237 family.

The chain is UPF0237 protein MA_3235 from Methanosarcina acetivorans (strain ATCC 35395 / DSM 2834 / JCM 12185 / C2A).